A 261-amino-acid chain; its full sequence is Cytochrome c oxidase subunit 3 (261 aa).

Over 1–15 the chain is Mitochondrial matrix; the sequence is MTHQTHAYHMVNPSP. Residues 16-34 traverse the membrane as a helical segment; sequence WPLTGALSALLMTSGLIMW. The Mitochondrial intermembrane portion of the chain corresponds to 35–40; that stretch reads FHFNST. Residues 41-66 traverse the membrane as a helical segment; that stretch reads TLLMLGLTTNMLTMYQWWRDIIREST. The Mitochondrial matrix portion of the chain corresponds to 67–72; sequence FQGHHT. The helical transmembrane segment at 73–105 threads the bilayer; it reads PNVQKGLRYGMILFIISEVLFFTGFFWAFYHSS. At 106–128 the chain is on the mitochondrial intermembrane side; sequence LAPTPELGGCWPPTGIHPLNPLE. A helical membrane pass occupies residues 129–152; it reads VPLLNTSVLLASGVSITWAHHSLM. Over 153–155 the chain is Mitochondrial matrix; the sequence is EGN. The chain crosses the membrane as a helical span at residues 156 to 183; it reads RNHMLQALFITIALGVYFTLLQASEYYE. Over 184–190 the chain is Mitochondrial intermembrane; that stretch reads APFTISD. A helical transmembrane segment spans residues 191-223; it reads GVYGSTFFVATGFHGLHVIIGSTFLIVCFFRQL. Residues 224-232 are Mitochondrial matrix-facing; the sequence is KFHFTSSHH. Residues 233–256 traverse the membrane as a helical segment; it reads FGFEAAAWYWHFVDVVWLFLYVSI. Residues 257–261 lie on the Mitochondrial intermembrane side of the membrane; that stretch reads YWWGS.

It belongs to the cytochrome c oxidase subunit 3 family. In terms of assembly, component of the cytochrome c oxidase (complex IV, CIV), a multisubunit enzyme composed of 14 subunits. The complex is composed of a catalytic core of 3 subunits MT-CO1, MT-CO2 and MT-CO3, encoded in the mitochondrial DNA, and 11 supernumerary subunits COX4I, COX5A, COX5B, COX6A, COX6B, COX6C, COX7A, COX7B, COX7C, COX8 and NDUFA4, which are encoded in the nuclear genome. The complex exists as a monomer or a dimer and forms supercomplexes (SCs) in the inner mitochondrial membrane with NADH-ubiquinone oxidoreductase (complex I, CI) and ubiquinol-cytochrome c oxidoreductase (cytochrome b-c1 complex, complex III, CIII), resulting in different assemblies (supercomplex SCI(1)III(2)IV(1) and megacomplex MCI(2)III(2)IV(2)).

Its subcellular location is the mitochondrion inner membrane. It catalyses the reaction 4 Fe(II)-[cytochrome c] + O2 + 8 H(+)(in) = 4 Fe(III)-[cytochrome c] + 2 H2O + 4 H(+)(out). Component of the cytochrome c oxidase, the last enzyme in the mitochondrial electron transport chain which drives oxidative phosphorylation. The respiratory chain contains 3 multisubunit complexes succinate dehydrogenase (complex II, CII), ubiquinol-cytochrome c oxidoreductase (cytochrome b-c1 complex, complex III, CIII) and cytochrome c oxidase (complex IV, CIV), that cooperate to transfer electrons derived from NADH and succinate to molecular oxygen, creating an electrochemical gradient over the inner membrane that drives transmembrane transport and the ATP synthase. Cytochrome c oxidase is the component of the respiratory chain that catalyzes the reduction of oxygen to water. Electrons originating from reduced cytochrome c in the intermembrane space (IMS) are transferred via the dinuclear copper A center (CU(A)) of subunit 2 and heme A of subunit 1 to the active site in subunit 1, a binuclear center (BNC) formed by heme A3 and copper B (CU(B)). The BNC reduces molecular oxygen to 2 water molecules using 4 electrons from cytochrome c in the IMS and 4 protons from the mitochondrial matrix. The sequence is that of Cytochrome c oxidase subunit 3 (MT-CO3) from Litocranius walleri (Gerenuk).